A 485-amino-acid chain; its full sequence is NADH-quinone oxidoreductase subunit N (485 aa).

Transmembrane regions (helical) follow at residues Ala10–Trp30, Phe35–Val55, Phe75–Leu95, Glu104–His124, Leu125–Tyr145, Tyr159–Ala179, Ile203–Phe223, Pro235–Met255, Leu271–Gln291, Leu297–Gln317, Gly327–Met347, Ala374–Gly394, Trp408–Arg427, and Ala449–Ile469.

The protein belongs to the complex I subunit 2 family. NDH-1 is composed of 13 different subunits. Subunits NuoA, H, J, K, L, M, N constitute the membrane sector of the complex.

Its subcellular location is the cell inner membrane. It catalyses the reaction a quinone + NADH + 5 H(+)(in) = a quinol + NAD(+) + 4 H(+)(out). Its function is as follows. NDH-1 shuttles electrons from NADH, via FMN and iron-sulfur (Fe-S) centers, to quinones in the respiratory chain. The immediate electron acceptor for the enzyme in this species is believed to be ubiquinone. Couples the redox reaction to proton translocation (for every two electrons transferred, four hydrogen ions are translocated across the cytoplasmic membrane), and thus conserves the redox energy in a proton gradient. This Yersinia enterocolitica serotype O:8 / biotype 1B (strain NCTC 13174 / 8081) protein is NADH-quinone oxidoreductase subunit N.